Reading from the N-terminus, the 362-residue chain is DLA class I histocompatibility antigen, A9/A9 alpha chain (362 aa).

The first 24 residues, 1 to 24 (MEVVMPRALLVLLSAALALTPTRA), serve as a signal peptide directing secretion. Residues 25 to 114 (GSHSLRYFYT…LRGYYNQSEA (90 aa)) form an alpha-1 region. Residues 25–306 (GSHSLRYFYT…RRWEPSPLST (282 aa)) lie on the Extracellular side of the membrane. A glycan (N-linked (GlcNAc...) asparagine) is linked at N110. The tract at residues 115–207 (GSHTRQTMYG…EMGKETLLRA (93 aa)) is alpha-2. 2 cysteine pairs are disulfide-bonded: C125–C189 and C228–C284. The tract at residues 208–299 (DPPSTRVTHH…GLPEPITRRW (92 aa)) is alpha-3. An Ig-like C1-type domain is found at 210-296 (PSTRVTHHPV…QHEGLPEPIT (87 aa)). Residues 300-306 (EPSPLST) are connecting peptide. Residues 307 to 329 (IVIVSIAALVLLVVAGVIGAVIW) form a helical membrane-spanning segment. Residues 330–362 (RKQRSGGKGPGYSHAARDDSAQGSDVSLTAPRV) are Cytoplasmic-facing. Residues 333 to 362 (RSGGKGPGYSHAARDDSAQGSDVSLTAPRV) form a disordered region.

It belongs to the MHC class I family. As to quaternary structure, heterodimer of an alpha chain and a beta chain (beta-2-microglobulin).

It localises to the membrane. Involved in the presentation of foreign antigens to the immune system. The polypeptide is DLA class I histocompatibility antigen, A9/A9 alpha chain (Canis lupus familiaris (Dog)).